Consider the following 195-residue polypeptide: Probable chorismate pyruvate-lyase (195 aa).

Substrate contacts are provided by R79, L117, and E180.

Belongs to the UbiC family.

It localises to the cytoplasm. It catalyses the reaction chorismate = 4-hydroxybenzoate + pyruvate. Its pathway is cofactor biosynthesis; ubiquinone biosynthesis. In terms of biological role, removes the pyruvyl group from chorismate, with concomitant aromatization of the ring, to provide 4-hydroxybenzoate (4HB) for the ubiquinone pathway. The sequence is that of Probable chorismate pyruvate-lyase from Ralstonia nicotianae (strain ATCC BAA-1114 / GMI1000) (Ralstonia solanacearum).